A 98-amino-acid polypeptide reads, in one-letter code: Putative transcriptional regulator YdaS (98 aa).

When overexpressed, it induces Rac prophage excision, possibly to counteract the lethal toxicity of YdaT. Overexpression of ydaS or ydaST reduces growth and leads to loss of cell viability. May contribute to toxicity and morphological defects. The polypeptide is Putative transcriptional regulator YdaS (ydaS) (Escherichia coli (strain K12)).